The primary structure comprises 179 residues: ATP synthase subunit delta, chloroplastic (179 aa).

Belongs to the ATPase delta chain family. As to quaternary structure, F-type ATPases have 2 components, F(1) - the catalytic core - and F(0) - the membrane proton channel. F(1) has five subunits: alpha(3), beta(3), gamma(1), delta(1), epsilon(1). CF(0) has four main subunits: a(1), b(1), b'(1) and c(10-14). The alpha and beta chains form an alternating ring which encloses part of the gamma chain. F(1) is attached to F(0) by a central stalk formed by the gamma and epsilon chains, while a peripheral stalk is formed by the delta, b and b' chains.

The protein resides in the plastid. Its subcellular location is the chloroplast thylakoid membrane. In terms of biological role, f(1)F(0) ATP synthase produces ATP from ADP in the presence of a proton or sodium gradient. F-type ATPases consist of two structural domains, F(1) containing the extramembraneous catalytic core and F(0) containing the membrane proton channel, linked together by a central stalk and a peripheral stalk. During catalysis, ATP synthesis in the catalytic domain of F(1) is coupled via a rotary mechanism of the central stalk subunits to proton translocation. This protein is part of the stalk that links CF(0) to CF(1). It either transmits conformational changes from CF(0) to CF(1) or is implicated in proton conduction. The sequence is that of ATP synthase subunit delta, chloroplastic from Ochrosphaera neapolitana.